The following is a 206-amino-acid chain: 3-demethoxyubiquinol 3-hydroxylase (206 aa).

Positions 55, 85, 88, 137, 169, and 172 each coordinate Fe cation.

This sequence belongs to the COQ7 family. It depends on Fe cation as a cofactor.

It is found in the cell membrane. It catalyses the reaction a 5-methoxy-2-methyl-3-(all-trans-polyprenyl)benzene-1,4-diol + AH2 + O2 = a 3-demethylubiquinol + A + H2O. The protein operates within cofactor biosynthesis; ubiquinone biosynthesis. Catalyzes the hydroxylation of 2-nonaprenyl-3-methyl-6-methoxy-1,4-benzoquinol during ubiquinone biosynthesis. The sequence is that of 3-demethoxyubiquinol 3-hydroxylase from Chromobacterium violaceum (strain ATCC 12472 / DSM 30191 / JCM 1249 / CCUG 213 / NBRC 12614 / NCIMB 9131 / NCTC 9757 / MK).